Consider the following 267-residue polypeptide: Ribosomal RNA small subunit methyltransferase J (267 aa).

Residues 133-134 (ER) and aspartate 187 each bind S-adenosyl-L-methionine.

It belongs to the methyltransferase superfamily. RsmJ family.

It is found in the cytoplasm. The enzyme catalyses guanosine(1516) in 16S rRNA + S-adenosyl-L-methionine = N(2)-methylguanosine(1516) in 16S rRNA + S-adenosyl-L-homocysteine + H(+). In terms of biological role, specifically methylates the guanosine in position 1516 of 16S rRNA. This chain is Ribosomal RNA small subunit methyltransferase J, found in Halorhodospira halophila (strain DSM 244 / SL1) (Ectothiorhodospira halophila (strain DSM 244 / SL1)).